We begin with the raw amino-acid sequence, 214 residues long: Small ribosomal subunit protein uS5 (214 aa).

Positions 54-117 (LKYEVVDIKV…RDAKMNIIPV (64 aa)) constitute an S5 DRBM domain.

Belongs to the universal ribosomal protein uS5 family. As to quaternary structure, part of the 30S ribosomal subunit. Contacts protein S4.

In terms of biological role, with S4 and S12 plays an important role in translational accuracy. The polypeptide is Small ribosomal subunit protein uS5 (Saccharolobus solfataricus (strain ATCC 35092 / DSM 1617 / JCM 11322 / P2) (Sulfolobus solfataricus)).